Here is a 322-residue protein sequence, read N- to C-terminus: Putative A-type inclusion protein (322 aa).

The tract at residues 284 to 322 (LTTEATGSVEVAPPSTDVTEPISDVTPSVDVEPEHPPAF) is disordered.

The protein belongs to the chordopoxvirinae A26 protein family.

In terms of biological role, encodes a truncated version of poxvirus A26 protein. The protein is Putative A-type inclusion protein of Vaccinia virus (strain Copenhagen) (VACV).